The chain runs to 370 residues: Dual-specificity RNA methyltransferase RlmN (370 aa).

Glutamate 93 functions as the Proton acceptor in the catalytic mechanism. Positions 99 to 337 (EEGRGTLCVS…VTTVRKTRGD (239 aa)) constitute a Radical SAM core domain. An intrachain disulfide couples cysteine 106 to cysteine 343. Cysteine 113, cysteine 117, and cysteine 120 together coordinate [4Fe-4S] cluster. S-adenosyl-L-methionine contacts are provided by residues 167–168 (GE), serine 199, 221–223 (SLH), and asparagine 300. The active-site S-methylcysteine intermediate is cysteine 343.

The protein belongs to the radical SAM superfamily. RlmN family. It depends on [4Fe-4S] cluster as a cofactor.

Its subcellular location is the cytoplasm. It carries out the reaction adenosine(2503) in 23S rRNA + 2 reduced [2Fe-2S]-[ferredoxin] + 2 S-adenosyl-L-methionine = 2-methyladenosine(2503) in 23S rRNA + 5'-deoxyadenosine + L-methionine + 2 oxidized [2Fe-2S]-[ferredoxin] + S-adenosyl-L-homocysteine. The enzyme catalyses adenosine(37) in tRNA + 2 reduced [2Fe-2S]-[ferredoxin] + 2 S-adenosyl-L-methionine = 2-methyladenosine(37) in tRNA + 5'-deoxyadenosine + L-methionine + 2 oxidized [2Fe-2S]-[ferredoxin] + S-adenosyl-L-homocysteine. Specifically methylates position 2 of adenine 2503 in 23S rRNA and position 2 of adenine 37 in tRNAs. m2A2503 modification seems to play a crucial role in the proofreading step occurring at the peptidyl transferase center and thus would serve to optimize ribosomal fidelity. This Francisella tularensis subsp. tularensis (strain WY96-3418) protein is Dual-specificity RNA methyltransferase RlmN.